The following is a 160-amino-acid chain: Putative pre-16S rRNA nuclease (160 aa).

Belongs to the YqgF nuclease family.

It localises to the cytoplasm. Could be a nuclease involved in processing of the 5'-end of pre-16S rRNA. This is Putative pre-16S rRNA nuclease from Cereibacter sphaeroides (strain ATCC 17029 / ATH 2.4.9) (Rhodobacter sphaeroides).